A 162-amino-acid chain; its full sequence is Endoribonuclease YbeY (162 aa).

Zn(2+) contacts are provided by His126, His130, and His136.

The protein belongs to the endoribonuclease YbeY family. Requires Zn(2+) as cofactor.

It localises to the cytoplasm. Functionally, single strand-specific metallo-endoribonuclease involved in late-stage 70S ribosome quality control and in maturation of the 3' terminus of the 16S rRNA. This chain is Endoribonuclease YbeY, found in Fusobacterium nucleatum subsp. nucleatum (strain ATCC 25586 / DSM 15643 / BCRC 10681 / CIP 101130 / JCM 8532 / KCTC 2640 / LMG 13131 / VPI 4355).